Consider the following 410-residue polypeptide: E3 ubiquitin-protein ligase MARCHF4 (410 aa).

Residues 1-18 (MLMPLCGLLWWWWCCCSG) form the signal peptide. The interval 92–136 (GPREVVGREPPPVPPPPPLPPSSVEDDWGGPATEPPASLLSSASS) is disordered. Over residues 100–112 (EPPPVPPPPPLPP) the composition is skewed to pro residues. Positions 126–136 (PPASLLSSASS) are enriched in low complexity. An RING-CH-type zinc finger spans residues 155–215 (DSGMRTPLCR…ELCYYKYHVI (61 aa)). Zn(2+)-binding residues include Cys163, Cys166, Cys179, Cys181, His189, Cys192, Cys205, and Cys208. 2 helical membrane-spanning segments follow: residues 238-258 (VAAA…LIWS) and 272-292 (LFQI…GLII). 2 disordered regions span residues 324–372 (EDQK…SGPL) and 390–410 (PHEQ…VTTV). The segment covering 333 to 346 (NPRTSSSTQANIPS) has biased composition (polar residues). Low complexity predominate over residues 352–366 (AGTPAPEQGPAQAAG).

As to expression, expressed in brain and placenta.

The protein resides in the golgi apparatus membrane. It catalyses the reaction S-ubiquitinyl-[E2 ubiquitin-conjugating enzyme]-L-cysteine + [acceptor protein]-L-lysine = [E2 ubiquitin-conjugating enzyme]-L-cysteine + N(6)-ubiquitinyl-[acceptor protein]-L-lysine.. It functions in the pathway protein modification; protein ubiquitination. In terms of biological role, E3 ubiquitin-protein ligase that may mediate ubiquitination of MHC-I and CD4, and promote their subsequent endocytosis and sorting to lysosomes via multivesicular bodies. E3 ubiquitin ligases accept ubiquitin from an E2 ubiquitin-conjugating enzyme in the form of a thioester and then directly transfer the ubiquitin to targeted substrates. In Homo sapiens (Human), this protein is E3 ubiquitin-protein ligase MARCHF4.